A 525-amino-acid chain; its full sequence is GMP synthase [glutamine-hydrolyzing] (525 aa).

The Glutamine amidotransferase type-1 domain occupies R9–L207. The active-site Nucleophile is C86. Residues H181 and E183 contribute to the active site. Residues W208–R400 form the GMPS ATP-PPase domain. S235–S241 serves as a coordination point for ATP.

Homodimer.

It catalyses the reaction XMP + L-glutamine + ATP + H2O = GMP + L-glutamate + AMP + diphosphate + 2 H(+). Its pathway is purine metabolism; GMP biosynthesis; GMP from XMP (L-Gln route): step 1/1. Its function is as follows. Catalyzes the synthesis of GMP from XMP. In Shigella dysenteriae serotype 1 (strain Sd197), this protein is GMP synthase [glutamine-hydrolyzing].